Here is a 380-residue protein sequence, read N- to C-terminus: Acid phosphatase-like protein XcAP-3 (380 aa).

An N-terminal signal peptide occupies residues 1 to 19 (MKATILLFLVLAVVQLSTA). 3 disulfides stabilise this stretch: C147-C374, C167-C221, and C347-C351.

This sequence belongs to the histidine acid phosphatase family.

It is found in the secreted. Its function is as follows. Probably modulates blood feeding of fleas on vertebrate species by binding and sequestering different mediators involved in the host response. Binds histamine. Binds leukotriene C4. Does not bind serotonin, adrenaline, noradrenaline, leukotriene B4, leukotriene D4, leukotriene E4, ADP, and stable analogs of thromboxane A2: U-46619 and cTXA2. The polypeptide is Acid phosphatase-like protein XcAP-3 (Xenopsylla cheopis (Oriental rat flea)).